The sequence spans 270 residues: Type III pantothenate kinase (270 aa).

Residue 6–13 participates in ATP binding; that stretch reads DVRNTHTV. 109 to 112 provides a ligand contact to substrate; that stretch reads GADR. Residue Asp111 is the Proton acceptor of the active site. Asp131 is a binding site for K(+). Ser134 is a binding site for ATP. A substrate-binding site is contributed by Thr186.

This sequence belongs to the type III pantothenate kinase family. Homodimer. It depends on NH4(+) as a cofactor. Requires K(+) as cofactor.

It is found in the cytoplasm. The enzyme catalyses (R)-pantothenate + ATP = (R)-4'-phosphopantothenate + ADP + H(+). Its pathway is cofactor biosynthesis; coenzyme A biosynthesis; CoA from (R)-pantothenate: step 1/5. In terms of biological role, catalyzes the phosphorylation of pantothenate (Pan), the first step in CoA biosynthesis. The sequence is that of Type III pantothenate kinase from Mycolicibacterium gilvum (strain PYR-GCK) (Mycobacterium gilvum (strain PYR-GCK)).